The following is a 672-amino-acid chain: MTSITHAELGWNEVGTPVSDQFDDVYFSNVNGLEETRYVFLKQNLIPERWQEFDRRRFVIGETGFGTGLNFLAVWQAFNDFRRANPDATLKELHFISFEKFPLSKQDLIKAHQAWPELAELAEKLHRHYPPAVPECHRIVLDNGAVTLDLWLGDIKDCLPSVPYGEEGIIDTWFLDGFAPSKNPEMWNQDLFNGMAKLARSECRVATFTSAGFVRRGLIEAGFAMKKVKGFGTKREMIAGCMETRQPQSRHAPYFNRTSASHLDSIAIIGGGIASAALAKALVQRGQKVTLYCKHAQAAEGASGNRQGAVYPLLNGSHDGVSRVFAPAFLFTRQFVEQAAQALTFDHDWCGVTQLMWDEKSTNKLDKMLSGNFAPELIQKLSAEETAAKIGLPIDMASVHYPLGGWLCPAELTQALFAQLDTLDNFTAKFEQSVEQLIWDERSQQWQVHTQGQHDTYSAVVIANGHEFQTFSQTADIPLGQVKGQVSHAPATETLSKLKSVLCYDGYMTPVNPNNQHLCIGASYDRRHLDTEFDVNAQQENAEKLTQCVPNQAWAKEVDTSGNLSRQGIRCVSRDHLPFVGNVGDFSAIKRQYADLPHTQAEEIEVISQFPNLFCLLGLGSRGLSSAPLMAELLASQICNDPLPLPVDVLEELHPSRMWVRKLRKGKAITEL.

Positions 1-243 are tRNA (mnm(5)s(2)U34)-methyltransferase; the sequence is MTSITHAELG…KREMIAGCME (243 aa). The interval 269 to 672 is FAD-dependent cmnm(5)s(2)U34 oxidoreductase; the sequence is IGGGIASAAL…LRKGKAITEL (404 aa).

It in the N-terminal section; belongs to the methyltransferase superfamily. tRNA (mnm(5)s(2)U34)-methyltransferase family. This sequence in the C-terminal section; belongs to the DAO family. The cofactor is FAD.

It is found in the cytoplasm. The catalysed reaction is 5-aminomethyl-2-thiouridine(34) in tRNA + S-adenosyl-L-methionine = 5-methylaminomethyl-2-thiouridine(34) in tRNA + S-adenosyl-L-homocysteine + H(+). Catalyzes the last two steps in the biosynthesis of 5-methylaminomethyl-2-thiouridine (mnm(5)s(2)U) at the wobble position (U34) in tRNA. Catalyzes the FAD-dependent demodification of cmnm(5)s(2)U34 to nm(5)s(2)U34, followed by the transfer of a methyl group from S-adenosyl-L-methionine to nm(5)s(2)U34, to form mnm(5)s(2)U34. This is tRNA 5-methylaminomethyl-2-thiouridine biosynthesis bifunctional protein MnmC from Vibrio vulnificus (strain YJ016).